The following is a 111-amino-acid chain: ATP-dependent Clp protease adapter protein ClpS (111 aa).

It belongs to the ClpS family. In terms of assembly, binds to the N-terminal domain of the chaperone ClpA.

Involved in the modulation of the specificity of the ClpAP-mediated ATP-dependent protein degradation. The polypeptide is ATP-dependent Clp protease adapter protein ClpS (Legionella pneumophila (strain Paris)).